A 370-amino-acid polypeptide reads, in one-letter code: A-type ATP synthase subunit C (370 aa).

The protein belongs to the V-ATPase V0D/AC39 subunit family. In terms of assembly, has multiple subunits with at least A(3), B(3), C, D, E, F, H, I and proteolipid K(x).

Its subcellular location is the cell membrane. Functionally, component of the A-type ATP synthase that produces ATP from ADP in the presence of a proton gradient across the membrane. The protein is A-type ATP synthase subunit C of Pyrococcus furiosus (strain ATCC 43587 / DSM 3638 / JCM 8422 / Vc1).